The sequence spans 318 residues: Ankyrin repeat and SOCS box protein 7 (318 aa).

ANK repeat units follow at residues 13 to 42 (QEEL…SPNG), 46 to 75 (NGWT…DPTV), 80 to 109 (GGFT…RSDI), 116 to 145 (DGWT…EVDP), 149 to 178 (KGTT…NIDI), 180 to 208 (NGFL…DTDL), and 213 to 242 (DGQT…DTNT). Residues 265–318 (LDFLQEVTRQPRNLQDLCRIKIRQCIGLQNLKLLDELPIAKVMKDYLKHKFDDI) form the SOCS box domain.

It belongs to the ankyrin SOCS box (ASB) family. Interacts with CUL5. Interacts with RNF7. Interacts with PSRC1.

Its pathway is protein modification; protein ubiquitination. Functionally, probable substrate-recognition component of a SCF-like ECS (Elongin-Cullin-SOCS-box protein) E3 ubiquitin-protein ligase complex which mediates the ubiquitination and subsequent proteasomal degradation of target proteins. Plays a role in spindle dynamics and genome integrity by targeting the mitotic progression protein PSRC1 for proteasomal degradation in a cell cycle-dependent manner. Also participates in meiosis by mediating the proper attachment between kinetochores and microtubules. The polypeptide is Ankyrin repeat and SOCS box protein 7 (ASB7) (Macaca fascicularis (Crab-eating macaque)).